A 667-amino-acid polypeptide reads, in one-letter code: UvrABC system protein B (667 aa).

The Helicase ATP-binding domain occupies lysine 31–aspartate 414. Glycine 44–threonine 51 is a binding site for ATP. The Beta-hairpin motif lies at tyrosine 97 to isoleucine 120. In terms of domain architecture, Helicase C-terminal spans glutamine 435–isoleucine 597. Residues leucine 630–glutamate 665 form the UVR domain.

It belongs to the UvrB family. Forms a heterotetramer with UvrA during the search for lesions. Interacts with UvrC in an incision complex.

The protein resides in the cytoplasm. In terms of biological role, the UvrABC repair system catalyzes the recognition and processing of DNA lesions. A damage recognition complex composed of 2 UvrA and 2 UvrB subunits scans DNA for abnormalities. Upon binding of the UvrA(2)B(2) complex to a putative damaged site, the DNA wraps around one UvrB monomer. DNA wrap is dependent on ATP binding by UvrB and probably causes local melting of the DNA helix, facilitating insertion of UvrB beta-hairpin between the DNA strands. Then UvrB probes one DNA strand for the presence of a lesion. If a lesion is found the UvrA subunits dissociate and the UvrB-DNA preincision complex is formed. This complex is subsequently bound by UvrC and the second UvrB is released. If no lesion is found, the DNA wraps around the other UvrB subunit that will check the other stand for damage. In Latilactobacillus sakei subsp. sakei (strain 23K) (Lactobacillus sakei subsp. sakei), this protein is UvrABC system protein B.